The sequence spans 216 residues: 3-isopropylmalate dehydratase small subunit 2 (216 aa).

It belongs to the LeuD family. LeuD type 1 subfamily. As to quaternary structure, heterodimer of LeuC and LeuD.

It carries out the reaction (2R,3S)-3-isopropylmalate = (2S)-2-isopropylmalate. Its pathway is amino-acid biosynthesis; L-leucine biosynthesis; L-leucine from 3-methyl-2-oxobutanoate: step 2/4. Functionally, catalyzes the isomerization between 2-isopropylmalate and 3-isopropylmalate, via the formation of 2-isopropylmaleate. This Bordetella pertussis (strain Tohama I / ATCC BAA-589 / NCTC 13251) protein is 3-isopropylmalate dehydratase small subunit 2.